We begin with the raw amino-acid sequence, 615 residues long: MFS-type transporter 1 (615 aa).

A disordered region spans residues 1–85 (MTALAAVPDL…GNNVSPHGRH (85 aa)). A compositionally biased stretch (polar residues) spans 16–53 (PSTTTVHSPNYSGSPADISSSPTTRAVSRNTARQTASA). N-linked (GlcNAc...) asparagine glycosylation occurs at Asn-25. 6 helical membrane passes run 94-114 (CLVI…SGIL), 138-158 (VYSL…HIIG), 162-182 (VWIT…RSAT), 192-212 (VLGV…TNGF), 222-242 (FAFQ…LGGI), and 251-271 (FGFY…LVVL). An N-linked (GlcNAc...) asparagine glycan is attached at Asn-302. 8 helical membrane-spanning segments follow: residues 320 to 340 (WTGT…FSVV), 351 to 371 (QNIA…LWVG), 397 to 417 (AAVF…ALYF), 432 to 452 (FLPM…LVET), 455 to 475 (VRWL…IMAL), 488 to 508 (FAML…NLII), 522 to 542 (AVFN…TAVV), and 585 to 605 (AAFW…FLGL).

This sequence belongs to the major facilitator superfamily. EmrB family.

The protein localises to the membrane. MFS-type transporter; part of the gene cluster that mediates the biosynthesis of pyriculol and pyriculariol, two heptaketides that induce lesion formation upon application on rice leaves but are dispensable for pathogenicity. With the ABC transporter ABC7, is most likely responsible for pyriculol and pyriculariol secretion and thereby may contribute to intrinsic resistance. This is MFS-type transporter 1 from Pyricularia oryzae (strain 70-15 / ATCC MYA-4617 / FGSC 8958) (Rice blast fungus).